A 63-amino-acid chain; its full sequence is Large ribosomal subunit protein bL32 (63 aa).

This sequence belongs to the bacterial ribosomal protein bL32 family.

The chain is Large ribosomal subunit protein bL32 from Acholeplasma laidlawii.